Reading from the N-terminus, the 1207-residue chain is Systemin receptor SR160 (1207 aa).

A signal peptide spans 1–34 (MKAHKTVFNQHPLSLNKLFFVLLLIFFLPPASPA). The short motif at 71–78 (CSFTGVSC) is the Cys pair 1 element. LRR repeat units lie at residues 109-131 (NLESLVLKNANLSGSLTSAAKSQ), 135-157 (TLDSIDLAENTISGPISDISSFG), 161-181 (NLKSLNLSKNFLDPPGKEMLK), 186-207 (SLQVLDLSYNNISGFNLFPWVS), 213-234 (ELEFFSIKGNKLAGSIPELDFK), 235-257 (NLSYLDLSANNFSTVFPSFKDCS), 258-280 (NLQHLDLSSNKFYGDIGSSLSSC), 282-304 (KLSFLNLTNNQFVGLVPKLPSES), 305-325 (LQYLYLRGNDFQGVYPNQLAD), 329-350 (TVVELDLSYNNFSGMVPESLGE), 353-375 (SLELVDISNNNFSGKLPVDTLLK), 378-401 (NIKTMVLSFNKFVGGLPDSFSNLP), 402-423 (KLETLDMSSNNLTGIIPSGICK), 428-450 (NLKVLYLQNNLFKGPIPDSLSNC), 452-474 (QLVSLDLSFNYLTGSIPSSLGSL), 476-499 (KLKDLILWLNQLSGEIPQELMYLQ), 500-523 (ALENLILDFNDLTGPIPASLSNCT), 524-547 (KLNWISLSNNQLSGEIPASLGRLS), 548-570 (NLAILKLGNNSISGNIPAELGNC), and 572-594 (SLIWLDLNTNFLNGSIPPPLFKQ). Asparagine 119 carries N-linked (GlcNAc...) asparagine glycosylation. N-linked (GlcNAc...) asparagine glycans are attached at residues asparagine 166 and asparagine 196. 2 N-linked (GlcNAc...) asparagine glycosylation sites follow: asparagine 235 and asparagine 245. Asparagine 287 is a glycosylation site (N-linked (GlcNAc...) asparagine). Residues asparagine 339 and asparagine 363 are each glycosylated (N-linked (GlcNAc...) asparagine). 2 N-linked (GlcNAc...) asparagine glycosylation sites follow: asparagine 412 and asparagine 449. The N-linked (GlcNAc...) asparagine glycan is linked to asparagine 521. 4 N-linked (GlcNAc...) asparagine glycosylation sites follow: asparagine 556, asparagine 584, asparagine 646, and asparagine 662. 4 LRR repeats span residues 664 to 686 (SMIFLDLSYNKLEGSIPKELGAM), 688 to 711 (YLSILNLGHNDLSGMIPQQLGGLK), 712 to 735 (NVAILDLSYNRFNGTIPNSLTSLT), and 736 to 758 (LLGEIDLSNNNLSGMIPESAPFD). Asparagine 724, asparagine 746, and asparagine 767 each carry an N-linked (GlcNAc...) asparagine glycan. The Cys pair 2 motif lies at 771–779 (CGYPLPLPC). A helical membrane pass occupies residues 803–823 (SVAMGLLFSLFCIFGLIIVAI). One can recognise a Protein kinase domain in the interval 888–1163 (FHNDSLVGSG…IQVMAMFKEI (276 aa)). ATP-binding positions include 894–902 (VGSGGFGDV) and lysine 916. Catalysis depends on aspartate 1014, which acts as the Proton acceptor.

This sequence belongs to the protein kinase superfamily. Ser/Thr protein kinase family. In terms of processing, glycosylated.

The protein localises to the cell membrane. The enzyme catalyses L-seryl-[protein] + ATP = O-phospho-L-seryl-[protein] + ADP + H(+). It carries out the reaction L-threonyl-[protein] + ATP = O-phospho-L-threonyl-[protein] + ADP + H(+). In terms of biological role, receptor with a serine/threonine-protein kinase activity. Involved in the perception of systemin, a peptide hormone responsible for the systemic activation of defense genes in leaves of wounded plants. May also regulate, in response to brassinosteroid binding, a signaling cascade involved in plant development. In Solanum peruvianum (Peruvian tomato), this protein is Systemin receptor SR160.